Reading from the N-terminus, the 181-residue chain is Oligoribonuclease (181 aa).

The Exonuclease domain occupies 8-171; sequence LIWIDLEMTG…DDIRESVGEL (164 aa). The active site involves Tyr-129.

Belongs to the oligoribonuclease family.

It localises to the cytoplasm. In terms of biological role, 3'-to-5' exoribonuclease specific for small oligoribonucleotides. This chain is Oligoribonuclease, found in Serratia proteamaculans (strain 568).